The following is a 127-amino-acid chain: Small ribosomal subunit protein uS17m (127 aa).

Belongs to the universal ribosomal protein uS17 family.

It localises to the mitochondrion. The protein is Small ribosomal subunit protein uS17m (mrps17) of Dictyostelium discoideum (Social amoeba).